A 250-amino-acid chain; its full sequence is Phosphoribosylaminoimidazole-succinocarboxamide synthase (250 aa).

It belongs to the SAICAR synthetase family.

It carries out the reaction 5-amino-1-(5-phospho-D-ribosyl)imidazole-4-carboxylate + L-aspartate + ATP = (2S)-2-[5-amino-1-(5-phospho-beta-D-ribosyl)imidazole-4-carboxamido]succinate + ADP + phosphate + 2 H(+). The protein operates within purine metabolism; IMP biosynthesis via de novo pathway; 5-amino-1-(5-phospho-D-ribosyl)imidazole-4-carboxamide from 5-amino-1-(5-phospho-D-ribosyl)imidazole-4-carboxylate: step 1/2. This is Phosphoribosylaminoimidazole-succinocarboxamide synthase from Chloroflexus aggregans (strain MD-66 / DSM 9485).